Reading from the N-terminus, the 214-residue chain is Redox-sensing transcriptional repressor Rex (214 aa).

The segment at residues 17–56 (LYYRIFKRFHADQVEKASSKQIADAMGIDSATVRRDFSYF) is a DNA-binding region (H-T-H motif). Residue 91–96 (GCGNIG) participates in NAD(+) binding.

It belongs to the transcriptional regulatory Rex family. As to quaternary structure, homodimer.

It localises to the cytoplasm. In terms of biological role, modulates transcription in response to changes in cellular NADH/NAD(+) redox state. The chain is Redox-sensing transcriptional repressor Rex from Streptococcus pyogenes serotype M4 (strain MGAS10750).